A 194-amino-acid polypeptide reads, in one-letter code: Large ribosomal subunit protein eL15 (194 aa).

Positions 164-194 (SAGKKGRGLRNKGKGAEKVRPSVRANKGKTK) are disordered. Positions 167-176 (KKGRGLRNKG) are enriched in basic residues.

The protein belongs to the eukaryotic ribosomal protein eL15 family.

The protein is Large ribosomal subunit protein eL15 of Thermococcus gammatolerans (strain DSM 15229 / JCM 11827 / EJ3).